A 66-amino-acid chain; its full sequence is Conotoxin PnMLCL-01 (66 aa).

The signal sequence occupies residues 1–19 (MLCLPVFIILLLLASPAAS). Residues 20–45 (NPLEKRIQSDLIRAALEDADTKNDPR) constitute a propeptide that is removed on maturation. Cysteine amide is present on Cys63.

This sequence belongs to the conotoxin T superfamily. Post-translationally, contains 2 disulfide bonds that can be either 'C1-C3, C2-C4' or 'C1-C4, C2-C3', since these disulfide connectivities have been observed for conotoxins with cysteine framework V (for examples, see AC P0DQQ7 and AC P81755). As to expression, expressed by the venom duct.

It localises to the secreted. The sequence is that of Conotoxin PnMLCL-01 from Conus pennaceus (Feathered cone).